Here is a 357-residue protein sequence, read N- to C-terminus: DNA replication and repair protein RecF (357 aa).

An ATP-binding site is contributed by Gly30–Thr37.

The protein belongs to the RecF family.

The protein resides in the cytoplasm. The RecF protein is involved in DNA metabolism; it is required for DNA replication and normal SOS inducibility. RecF binds preferentially to single-stranded, linear DNA. It also seems to bind ATP. The sequence is that of DNA replication and repair protein RecF from Escherichia coli O7:K1 (strain IAI39 / ExPEC).